Here is a 221-residue protein sequence, read N- to C-terminus: Sugar transporter SWEET1 (221 aa).

7 consecutive transmembrane segments (helical) span residues 3 to 23 (AGGV…LGMF), 44 to 63 (FLPF…YGVL), 68 to 88 (TLII…LAYL), 102 to 122 (ATLL…VPDL), 129 to 149 (LGLF…ADLA), 160 to 180 (LSFS…IYGF), and 186 to 206 (YITV…VLFY). A MtN3/slv 1 domain is found at 10 to 94 (FLSSACVLFT…LAYLHYSPQK (85 aa)). The region spanning 127 to 212 (QQLGLFCSVF…VLFYKYPPEQ (86 aa)) is the MtN3/slv 2 domain. Positions 149 to 221 (AKIIQTKSTQ…QDTKYRLLQT (73 aa)) are mediates interaction with TRPV2.

The protein belongs to the SWEET sugar transporter family. Interacts with TRPV2; the interaction probably occurs intracellularly and depends on TRPV2 N-glycosylation.

It is found in the golgi apparatus membrane. It localises to the cell membrane. Its function is as follows. Mediates sugar transport across membranes. May stimulate V(D)J recombination by the activation of RAG1. This chain is Sugar transporter SWEET1 (Slc50a1), found in Rattus norvegicus (Rat).